The primary structure comprises 576 residues: Arginine--tRNA ligase (576 aa).

Residues 122-132 (PNVAKQMHVGH) carry the 'HIGH' region motif.

This sequence belongs to the class-I aminoacyl-tRNA synthetase family. In terms of assembly, monomer.

Its subcellular location is the cytoplasm. The enzyme catalyses tRNA(Arg) + L-arginine + ATP = L-arginyl-tRNA(Arg) + AMP + diphosphate. The sequence is that of Arginine--tRNA ligase from Yersinia pseudotuberculosis serotype O:1b (strain IP 31758).